Reading from the N-terminus, the 150-residue chain is Transthyretin (150 aa).

Residues 1 to 20 (MAFHSMLLVFLAGLVFLTEA) form the signal peptide. A Sulfocysteine modification is found at cysteine 33. 3 residues coordinate L-thyroxine: lysine 38, glutamate 77, and serine 140.

It belongs to the transthyretin family. As to quaternary structure, homotetramer. Dimer of dimers. In the homotetramer, subunits assemble around a central channel that can accommodate two ligand molecules. Interacts with RBP4. Sulfonation of the reactive cysteine Cys-33 enhances the stability of the native conformation of TTR, avoiding misassembly of the protein leading to amyloid formation. Strongly expressed in the brain, and to a lesser extent in the eye.

The protein resides in the secreted. Its function is as follows. Thyroid hormone-binding protein, with a much higher binding affinity for triiodothyronine (T3) than for thyroxine (T4). Probably transports triiodothyronine from the bloodstream to the brain. This Crocodylus porosus (Saltwater crocodile) protein is Transthyretin (TTR).